We begin with the raw amino-acid sequence, 168 residues long: Type-2 ice-structuring protein (168 aa).

The signal sequence occupies residues 1–17 (MLTVSLLVCAMMALTQA). The propeptide occupies 18–34 (DHDGVLKGTATEAGEVS). 5 disulfides stabilise this stretch: Cys45–Cys56, Cys73–Cys163, Cys107–Cys138, Cys127–Cys149, and Cys139–Cys155. The C-type lectin domain occupies 52 to 164 (HGQRCFYSEA…CPASHASICA (113 aa)).

Its subcellular location is the secreted. Its function is as follows. Has antifreeze activity to protect fish blood from freezing at subzero sea water temperatures. Binds to ice crystals and inhibits their growth. The thermal hysteresis (TH) activity, the ability to lower the blood freezing point, is approximately 0.45 degrees Celsius at 0.15 mM for this protein. The protein is Type-2 ice-structuring protein of Brachyopsis segaliensis (Sea poacher).